The primary structure comprises 382 residues: Queuine tRNA-ribosyltransferase (382 aa).

The active-site Proton acceptor is the aspartate 93. Substrate contacts are provided by residues 93-97, aspartate 147, glutamine 191, and glycine 218; that span reads DSGGF. Positions 249–255 are RNA binding; that stretch reads GVGKPED. The active-site Nucleophile is aspartate 268. The segment at 273-277 is RNA binding; important for wobble base 34 recognition; that stretch reads TRNAR. Residues cysteine 306, cysteine 308, cysteine 311, and histidine 337 each contribute to the Zn(2+) site.

This sequence belongs to the queuine tRNA-ribosyltransferase family. Homodimer. Within each dimer, one monomer is responsible for RNA recognition and catalysis, while the other monomer binds to the replacement base PreQ1. Zn(2+) is required as a cofactor.

The catalysed reaction is 7-aminomethyl-7-carbaguanine + guanosine(34) in tRNA = 7-aminomethyl-7-carbaguanosine(34) in tRNA + guanine. It participates in tRNA modification; tRNA-queuosine biosynthesis. Catalyzes the base-exchange of a guanine (G) residue with the queuine precursor 7-aminomethyl-7-deazaguanine (PreQ1) at position 34 (anticodon wobble position) in tRNAs with GU(N) anticodons (tRNA-Asp, -Asn, -His and -Tyr). Catalysis occurs through a double-displacement mechanism. The nucleophile active site attacks the C1' of nucleotide 34 to detach the guanine base from the RNA, forming a covalent enzyme-RNA intermediate. The proton acceptor active site deprotonates the incoming PreQ1, allowing a nucleophilic attack on the C1' of the ribose to form the product. After dissociation, two additional enzymatic reactions on the tRNA convert PreQ1 to queuine (Q), resulting in the hypermodified nucleoside queuosine (7-(((4,5-cis-dihydroxy-2-cyclopenten-1-yl)amino)methyl)-7-deazaguanosine). This is Queuine tRNA-ribosyltransferase from Haemophilus influenzae (strain ATCC 51907 / DSM 11121 / KW20 / Rd).